The following is a 165-amino-acid chain: NADH-quinone oxidoreductase subunit I (165 aa).

4Fe-4S ferredoxin-type domains lie at 57–86 (RRYE…IESD) and 96–125 (SRYD…ETHI). The [4Fe-4S] cluster site is built by Cys-66, Cys-69, Cys-72, Cys-76, Cys-105, Cys-108, Cys-111, and Cys-115.

The protein belongs to the complex I 23 kDa subunit family. NDH-1 is composed of 14 different subunits. Subunits NuoA, H, J, K, L, M, N constitute the membrane sector of the complex. Requires [4Fe-4S] cluster as cofactor.

Its subcellular location is the cell inner membrane. It carries out the reaction a quinone + NADH + 5 H(+)(in) = a quinol + NAD(+) + 4 H(+)(out). NDH-1 shuttles electrons from NADH, via FMN and iron-sulfur (Fe-S) centers, to quinones in the respiratory chain. The immediate electron acceptor for the enzyme in this species is believed to be ubiquinone. Couples the redox reaction to proton translocation (for every two electrons transferred, four hydrogen ions are translocated across the cytoplasmic membrane), and thus conserves the redox energy in a proton gradient. This Polaromonas naphthalenivorans (strain CJ2) protein is NADH-quinone oxidoreductase subunit I.